The sequence spans 461 residues: Bifunctional protein GlmU (461 aa).

The tract at residues 1–229 is pyrophosphorylase; sequence MEKYVVVLAA…FSESLGVNDR (229 aa). UDP-N-acetyl-alpha-D-glucosamine-binding positions include 8–11, K22, Q72, and 77–78; these read LAAG and GT. D102 lines the Mg(2+) pocket. UDP-N-acetyl-alpha-D-glucosamine-binding residues include G139, E154, N169, and N227. N227 is a binding site for Mg(2+). The tract at residues 230 to 250 is linker; it reads IALAEATRIMQRRINEGHMRD. The segment at 251 to 461 is N-acetyltransferase; the sequence is GVTFIDPATA…LPLSEDEEWK (211 aa). UDP-N-acetyl-alpha-D-glucosamine contacts are provided by R332 and K350. The active-site Proton acceptor is H362. 2 residues coordinate UDP-N-acetyl-alpha-D-glucosamine: Y365 and N376. Acetyl-CoA is bound by residues A422 and R439.

The protein in the N-terminal section; belongs to the N-acetylglucosamine-1-phosphate uridyltransferase family. It in the C-terminal section; belongs to the transferase hexapeptide repeat family. Homotrimer. Requires Mg(2+) as cofactor.

Its subcellular location is the cytoplasm. The catalysed reaction is alpha-D-glucosamine 1-phosphate + acetyl-CoA = N-acetyl-alpha-D-glucosamine 1-phosphate + CoA + H(+). The enzyme catalyses N-acetyl-alpha-D-glucosamine 1-phosphate + UTP + H(+) = UDP-N-acetyl-alpha-D-glucosamine + diphosphate. It functions in the pathway nucleotide-sugar biosynthesis; UDP-N-acetyl-alpha-D-glucosamine biosynthesis; N-acetyl-alpha-D-glucosamine 1-phosphate from alpha-D-glucosamine 6-phosphate (route II): step 2/2. The protein operates within nucleotide-sugar biosynthesis; UDP-N-acetyl-alpha-D-glucosamine biosynthesis; UDP-N-acetyl-alpha-D-glucosamine from N-acetyl-alpha-D-glucosamine 1-phosphate: step 1/1. It participates in bacterial outer membrane biogenesis; LPS lipid A biosynthesis. Catalyzes the last two sequential reactions in the de novo biosynthetic pathway for UDP-N-acetylglucosamine (UDP-GlcNAc). The C-terminal domain catalyzes the transfer of acetyl group from acetyl coenzyme A to glucosamine-1-phosphate (GlcN-1-P) to produce N-acetylglucosamine-1-phosphate (GlcNAc-1-P), which is converted into UDP-GlcNAc by the transfer of uridine 5-monophosphate (from uridine 5-triphosphate), a reaction catalyzed by the N-terminal domain. This is Bifunctional protein GlmU from Lactobacillus delbrueckii subsp. bulgaricus (strain ATCC BAA-365 / Lb-18).